The following is a 203-amino-acid chain: Glycerol-3-phosphate acyltransferase (203 aa).

5 helical membrane passes run 6–26 (LTLAMILTAYLAGSISSAVLV), 56–76 (AAAMVLLFDMLKGAVPAYVAF), 82–102 (AVSLGVIAIAACLGHIFPIFF), 118–138 (APIGADLSLALIATWVIVVLI), and 141–161 (YSSLAAIVTALLAPAYTWYFD).

Belongs to the PlsY family. In terms of assembly, probably interacts with PlsX.

The protein localises to the cell inner membrane. It carries out the reaction an acyl phosphate + sn-glycerol 3-phosphate = a 1-acyl-sn-glycero-3-phosphate + phosphate. The protein operates within lipid metabolism; phospholipid metabolism. Its function is as follows. Catalyzes the transfer of an acyl group from acyl-phosphate (acyl-PO(4)) to glycerol-3-phosphate (G3P) to form lysophosphatidic acid (LPA). This enzyme utilizes acyl-phosphate as fatty acyl donor, but not acyl-CoA or acyl-ACP. In Shewanella loihica (strain ATCC BAA-1088 / PV-4), this protein is Glycerol-3-phosphate acyltransferase.